Consider the following 268-residue polypeptide: 4-hydroxy-tetrahydrodipicolinate reductase (268 aa).

Residues 10–15 (GAGGRM), D36, 99–101 (GTT), and 123–126 (APNM) contribute to the NAD(+) site. Residue H156 is the Proton donor/acceptor of the active site. Residue H157 coordinates (S)-2,3,4,5-tetrahydrodipicolinate. Residue K160 is the Proton donor of the active site. 166 to 167 (GT) is a (S)-2,3,4,5-tetrahydrodipicolinate binding site.

The protein belongs to the DapB family.

It is found in the cytoplasm. It catalyses the reaction (S)-2,3,4,5-tetrahydrodipicolinate + NAD(+) + H2O = (2S,4S)-4-hydroxy-2,3,4,5-tetrahydrodipicolinate + NADH + H(+). The enzyme catalyses (S)-2,3,4,5-tetrahydrodipicolinate + NADP(+) + H2O = (2S,4S)-4-hydroxy-2,3,4,5-tetrahydrodipicolinate + NADPH + H(+). It functions in the pathway amino-acid biosynthesis; L-lysine biosynthesis via DAP pathway; (S)-tetrahydrodipicolinate from L-aspartate: step 4/4. Its function is as follows. Catalyzes the conversion of 4-hydroxy-tetrahydrodipicolinate (HTPA) to tetrahydrodipicolinate. This Dechloromonas aromatica (strain RCB) protein is 4-hydroxy-tetrahydrodipicolinate reductase.